Here is a 130-residue protein sequence, read N- to C-terminus: Riboflavin kinase (130 aa).

A CDP-binding site is contributed by 10–15; the sequence is GFGEGK. Thr-39 and Asn-41 together coordinate Mg(2+). 2 residues coordinate FMN: Thr-96 and Glu-104. CDP is bound at residue 109–112; that stretch reads VNLR.

The protein belongs to the archaeal riboflavin kinase family. It depends on Mg(2+) as a cofactor.

It catalyses the reaction riboflavin + CTP = CDP + FMN + H(+). It functions in the pathway cofactor biosynthesis; FMN biosynthesis; FMN from riboflavin (CTP route): step 1/1. Its function is as follows. Catalyzes the CTP-dependent phosphorylation of riboflavin (vitamin B2) to form flavin mononucleotide (FMN). The protein is Riboflavin kinase of Methanococcus vannielii (strain ATCC 35089 / DSM 1224 / JCM 13029 / OCM 148 / SB).